The sequence spans 691 residues: DNA ligase (691 aa).

Residues 41 to 45, 90 to 91, and Glu130 each bind NAD(+); these read DAEYD and SL. The N6-AMP-lysine intermediate role is filled by Lys132. Arg153, Glu190, Lys307, and Lys331 together coordinate NAD(+). Zn(2+)-binding residues include Cys425, Cys428, Cys443, and Cys449. A BRCT domain is found at 610 to 691; it reads APQGVLAGKT…MHTLLEGHAR (82 aa).

It belongs to the NAD-dependent DNA ligase family. LigA subfamily. Mg(2+) is required as a cofactor. It depends on Mn(2+) as a cofactor.

The catalysed reaction is NAD(+) + (deoxyribonucleotide)n-3'-hydroxyl + 5'-phospho-(deoxyribonucleotide)m = (deoxyribonucleotide)n+m + AMP + beta-nicotinamide D-nucleotide.. Its function is as follows. DNA ligase that catalyzes the formation of phosphodiester linkages between 5'-phosphoryl and 3'-hydroxyl groups in double-stranded DNA using NAD as a coenzyme and as the energy source for the reaction. It is essential for DNA replication and repair of damaged DNA. The chain is DNA ligase from Burkholderia mallei (strain NCTC 10247).